The primary structure comprises 119 residues: Beta-2-microglobulin (119 aa).

The first 20 residues, 1–20 (MARFVAVALLVLLSLSGLEA), serve as a signal peptide directing secretion. In terms of domain architecture, Ig-like C1-type spans 25–114 (PKIQVYSRHP…VTFSTPKTVK (90 aa)). A disulfide bridge links Cys-45 with Cys-100.

Belongs to the beta-2-microglobulin family. As to quaternary structure, heterodimer of an alpha chain and a beta chain. Beta-2-microglobulin is the beta-chain of major histocompatibility complex class I molecules.

Its subcellular location is the secreted. Its function is as follows. Component of the class I major histocompatibility complex (MHC). Involved in the presentation of peptide antigens to the immune system. This chain is Beta-2-microglobulin (B2M), found in Plecturocebus moloch (Dusky titi monkey).